Here is a 198-residue protein sequence, read N- to C-terminus: Recombination protein RecR (198 aa).

A C4-type zinc finger spans residues 57 to 72 (CSVCGHITENDPCYIC). The region spanning 80–175 (SVICVVEDDK…KVTRLAQGLS (96 aa)) is the Toprim domain.

It belongs to the RecR family.

In terms of biological role, may play a role in DNA repair. It seems to be involved in an RecBC-independent recombinational process of DNA repair. It may act with RecF and RecO. The protein is Recombination protein RecR of Staphylococcus aureus (strain MRSA252).